The primary structure comprises 446 residues: Maltoporin (446 aa).

An N-terminal signal peptide occupies residues 1–25 (MMITLRKLPLAVAVAAGVMSAQAMA).

The protein belongs to the porin LamB (TC 1.B.3) family. As to quaternary structure, homotrimer formed of three 18-stranded antiparallel beta-barrels, containing three independent channels.

The protein localises to the cell outer membrane. The enzyme catalyses beta-maltose(in) = beta-maltose(out). In terms of biological role, involved in the transport of maltose and maltodextrins. The polypeptide is Maltoporin (Escherichia coli O7:K1 (strain IAI39 / ExPEC)).